The following is a 727-amino-acid chain: E3 SUMO-protein ligase pli1 (727 aa).

The SAP domain occupies 18 to 52 (ETGLIIPQLKDILRVFGLRLSGTKAELITRIKQLI). The PINIT domain occupies 108-261 (YSRPFAPVVH…SVVVCFVKVY (154 aa)). The segment at 290–371 (QDADIIATST…MQHILESTPS (82 aa)) adopts an SP-RING-type zinc-finger fold. Positions 321, 323, 344, and 347 each coordinate Zn(2+). S395 and S396 each carry phosphoserine. Disordered stretches follow at residues 408-558 (ELSD…TQHS) and 706-727 (QSNN…QSID). Composition is skewed to polar residues over residues 417 to 435 (TMAN…THNS) and 459 to 494 (VATS…NRST). The segment covering 546-558 (SQQNNNNSNTQHS) has biased composition (low complexity).

The protein belongs to the PIAS family. Interacts with hus5/ubc9.

It is found in the nucleus. It functions in the pathway protein modification; protein sumoylation. Its function is as follows. Acts as an E3 ligase mediating SUMO/Smt3 attachment to other proteins. Involved in the maintenance of the centromere and in telomere length. Regulates recombination, via extension sumoylation, particularly within the heterochromatin repeats. This is E3 SUMO-protein ligase pli1 (pli1) from Schizosaccharomyces pombe (strain 972 / ATCC 24843) (Fission yeast).